Here is a 261-residue protein sequence, read N- to C-terminus: Putative methyltransferase MJ0046 (261 aa).

The protein belongs to the methyltransferase superfamily.

The sequence is that of Putative methyltransferase MJ0046 from Methanocaldococcus jannaschii (strain ATCC 43067 / DSM 2661 / JAL-1 / JCM 10045 / NBRC 100440) (Methanococcus jannaschii).